A 477-amino-acid chain; its full sequence is FAD-dependent monooxygenase paxM (477 aa).

A helical membrane pass occupies residues A4 to L24. E35, G49, and R108 together coordinate FAD. Residue R195 is part of the active site. FAD is bound by residues D308 and A321. Residues L446–L466 traverse the membrane as a helical segment.

This sequence belongs to the paxM FAD-dependent monooxygenase family. It depends on FAD as a cofactor.

It localises to the membrane. It functions in the pathway secondary metabolite biosynthesis. Its function is as follows. FAD-dependent monooxygenase; part of the gene cluster that mediates the biosynthesis of paxilline, a mycotoxin that acts as an inhibitor of mammalian maxi-K channels. PaxG, the geranylgeranyl diphosphate (GGPP) synthase is proposed to catalyze the first step in paxilline biosynthesis. Condensation of indole-3-glycerol phosphate with GGPP by paxC then forms 3-geranylgeranylindole (3-GGI), followed by epoxidation and cyclization of this intermediate (by paxM and paxB) to form paspaline. Paspaline is subsequently converted to 13-desoxypaxilline by paxP, the latter being then converted to paxilline by paxQ. Finally paxilline can be mono- and di-prenylated by paxD. This chain is FAD-dependent monooxygenase paxM, found in Penicillium paxilli.